The following is a 312-amino-acid chain: RNA-binding protein Raly (312 aa).

Ser2 bears the N-acetylserine mark. Residue Lys4 forms a Glycyl lysine isopeptide (Lys-Gly) (interchain with G-Cter in SUMO2) linkage. The region spanning 21–92 (SRVFIGNLNT…QTLDINMAGE (72 aa)) is the RRM domain. The residue at position 44 (Lys44) is an N6-acetyllysine. Glycyl lysine isopeptide (Lys-Gly) (interchain with G-Cter in SUMO2) cross-links involve residues Lys94 and Lys99. A Phosphoserine modification is found at Ser135. Residue Lys159 forms a Glycyl lysine isopeptide (Lys-Gly) (interchain with G-Cter in SUMO2) linkage. Position 165 is an N6-acetyllysine; alternate (Lys165). Lys165 is covalently cross-linked (Glycyl lysine isopeptide (Lys-Gly) (interchain with G-Cter in SUMO2); alternate). Glycyl lysine isopeptide (Lys-Gly) (interchain with G-Cter in SUMO2) cross-links involve residues Lys179 and Lys191. The stretch at 184 to 216 (SSELQTIKTELTQIKSNIDALLGRLEQIAEEQK) forms a coiled coil. Residues 214-226 (EQKANPDGKKKGD) are compositionally biased toward basic and acidic residues. The tract at residues 214 to 312 (EQKANPDGKK…DTDAEDGALQ (99 aa)) is disordered. Residues 228-253 (SSGGGGGSSGGGGSSNVGGGSSGGSG) show a composition bias toward gly residues. Residue Thr268 is modified to Phosphothreonine. Ser270 carries the phosphoserine modification. Residues Thr274 and Thr292 each carry the phosphothreonine modification. Over residues 293 to 303 (HSEEELEHSQD) the composition is skewed to basic and acidic residues. A phosphoserine mark is found at Ser294 and Ser301. Thr304 carries the post-translational modification Phosphothreonine.

Belongs to the RRM HNRPC family. RALY subfamily. Identified in the spliceosome C complex. Interacts (through its RNA-binding domain) with FUS (through its RNA-binding domain); both are components of the same RNPs. Widely expressed. Expressed in brain, testis, lung, spleen and kidney. Weakly expressed in liver.

Its subcellular location is the nucleus. Its function is as follows. RNA-binding protein that acts as a transcriptional cofactor for cholesterol biosynthetic genes in the liver. Binds the lipid-responsive non-coding RNA LeXis and is required for LeXis-mediated effect on cholesterogenesis. May be a heterogeneous nuclear ribonucleoprotein (hnRNP). The sequence is that of RNA-binding protein Raly (Raly) from Mus musculus (Mouse).